Reading from the N-terminus, the 113-residue chain is Hydrogenase maturation factor HypA (113 aa).

Ni(2+) is bound at residue His2. Positions 73, 76, 89, and 92 each coordinate Zn(2+).

It belongs to the HypA/HybF family.

Involved in the maturation of [NiFe] hydrogenases. Required for nickel insertion into the metal center of the hydrogenase. The chain is Hydrogenase maturation factor HypA from Acidithiobacillus ferrooxidans (strain ATCC 23270 / DSM 14882 / CIP 104768 / NCIMB 8455) (Ferrobacillus ferrooxidans (strain ATCC 23270)).